A 164-amino-acid polypeptide reads, in one-letter code: GTP-dependent dephospho-CoA kinase (164 aa).

Positions 40, 41, 42, 59, 61, and 113 each coordinate GTP.

The protein belongs to the GTP-dependent DPCK family.

It catalyses the reaction 3'-dephospho-CoA + GTP = GDP + CoA + H(+). Its pathway is cofactor biosynthesis; coenzyme A biosynthesis. Its function is as follows. Catalyzes the GTP-dependent phosphorylation of the 3'-hydroxyl group of dephosphocoenzyme A to form coenzyme A (CoA). The chain is GTP-dependent dephospho-CoA kinase from Sulfolobus acidocaldarius (strain ATCC 33909 / DSM 639 / JCM 8929 / NBRC 15157 / NCIMB 11770).